The following is a 378-amino-acid chain: tRNA (guanine(26)-N(2))-dimethyltransferase (378 aa).

In terms of domain architecture, Trm1 methyltransferase spans 4-374 (KEVTEGKVRI…KGYEEIIRCV (371 aa)). Residues arginine 44, arginine 69, aspartate 87, aspartate 114, and alanine 115 each contribute to the S-adenosyl-L-methionine site. Residues cysteine 246, cysteine 249, cysteine 263, and cysteine 266 each contribute to the Zn(2+) site.

The protein belongs to the class I-like SAM-binding methyltransferase superfamily. Trm1 family.

It carries out the reaction guanosine(26) in tRNA + 2 S-adenosyl-L-methionine = N(2)-dimethylguanosine(26) in tRNA + 2 S-adenosyl-L-homocysteine + 2 H(+). In terms of biological role, dimethylates a single guanine residue at position 26 of a number of tRNAs using S-adenosyl-L-methionine as donor of the methyl groups. The chain is tRNA (guanine(26)-N(2))-dimethyltransferase from Saccharolobus islandicus (strain M.16.27) (Sulfolobus islandicus).